A 202-amino-acid polypeptide reads, in one-letter code: Dephospho-CoA kinase (202 aa).

One can recognise a DPCK domain in the interval 4–201; that stretch reads VVALTGGIAS…QKYLAMSRQN (198 aa). ATP is bound at residue 12–17; the sequence is ASGKTT.

The protein belongs to the CoaE family.

The protein localises to the cytoplasm. The catalysed reaction is 3'-dephospho-CoA + ATP = ADP + CoA + H(+). It participates in cofactor biosynthesis; coenzyme A biosynthesis; CoA from (R)-pantothenate: step 5/5. Functionally, catalyzes the phosphorylation of the 3'-hydroxyl group of dephosphocoenzyme A to form coenzyme A. This chain is Dephospho-CoA kinase, found in Vibrio cholerae serotype O1 (strain ATCC 39315 / El Tor Inaba N16961).